The chain runs to 827 residues: Lon protease (827 aa).

Residues 1–27 (MNDETLREQTTAESEETSPTTPSPEPE) are disordered. The Lon N-terminal domain occupies 32 to 225 (LPLIPLEGAV…KVLMFYRKQF (194 aa)). An ATP-binding site is contributed by 385-392 (GPPGVGKT). The region spanning 625 to 806 (IDQPGVAIGL…DEVLSIALLP (182 aa)) is the Lon proteolytic domain. Residues S712 and K755 contribute to the active site.

It belongs to the peptidase S16 family. Homohexamer. Organized in a ring with a central cavity.

The protein resides in the cytoplasm. The enzyme catalyses Hydrolysis of proteins in presence of ATP.. In terms of biological role, ATP-dependent serine protease that mediates the selective degradation of mutant and abnormal proteins as well as certain short-lived regulatory proteins. Required for cellular homeostasis and for survival from DNA damage and developmental changes induced by stress. Degrades polypeptides processively to yield small peptide fragments that are 5 to 10 amino acids long. Binds to DNA in a double-stranded, site-specific manner. This is Lon protease from Chloroflexus aurantiacus (strain ATCC 29366 / DSM 635 / J-10-fl).